Reading from the N-terminus, the 337-residue chain is GDP-fucose transporter, Golgi (337 aa).

The next 8 membrane-spanning stretches (helical) occupy residues asparagine 13–valine 35, valine 45–valine 67, isoleucine 95–threonine 117, tyrosine 121–leucine 140, serine 145–valine 163, serine 173–isoleucine 192, valine 205–asparagine 227, and serine 242–leucine 264.

Belongs to the TPT transporter family. SLC35C subfamily.

The protein localises to the golgi apparatus membrane. In terms of biological role, involved in GDP-fucose import from the cytoplasm into the Golgi lumen. Plays a major role in the fucosylation of N-glycans. Functions redundantly with Efr in the O-fucosylation of Notch, positively regulating Notch signaling. The polypeptide is GDP-fucose transporter, Golgi (Drosophila melanogaster (Fruit fly)).